Consider the following 305-residue polypeptide: tRNA dimethylallyltransferase (305 aa).

8–15 lines the ATP pocket; sequence GPTAVGKT. 10 to 15 is a binding site for substrate; sequence TAVGKT. The interval 33 to 36 is interaction with substrate tRNA; sequence DSRQ.

It belongs to the IPP transferase family. As to quaternary structure, monomer. It depends on Mg(2+) as a cofactor.

It catalyses the reaction adenosine(37) in tRNA + dimethylallyl diphosphate = N(6)-dimethylallyladenosine(37) in tRNA + diphosphate. Functionally, catalyzes the transfer of a dimethylallyl group onto the adenine at position 37 in tRNAs that read codons beginning with uridine, leading to the formation of N6-(dimethylallyl)adenosine (i(6)A). In Thermotoga neapolitana (strain ATCC 49049 / DSM 4359 / NBRC 107923 / NS-E), this protein is tRNA dimethylallyltransferase.